A 449-amino-acid polypeptide reads, in one-letter code: Phosphoglucosamine mutase (449 aa).

The Phosphoserine intermediate role is filled by Ser100. Mg(2+) is bound by residues Ser100, Asp241, Asp243, and Asp245. Position 100 is a phosphoserine (Ser100).

It belongs to the phosphohexose mutase family. It depends on Mg(2+) as a cofactor. In terms of processing, activated by phosphorylation.

It catalyses the reaction alpha-D-glucosamine 1-phosphate = D-glucosamine 6-phosphate. Its function is as follows. Catalyzes the conversion of glucosamine-6-phosphate to glucosamine-1-phosphate. This chain is Phosphoglucosamine mutase, found in Clostridium kluyveri (strain NBRC 12016).